Consider the following 501-residue polypeptide: Probable cytochrome P450 6t3 (501 aa).

Cys-444 contributes to the heme binding site.

The protein belongs to the cytochrome P450 family. It depends on heme as a cofactor.

It is found in the endoplasmic reticulum membrane. It localises to the microsome membrane. In terms of biological role, may be involved in the metabolism of insect hormones and in the breakdown of synthetic insecticides. This is Probable cytochrome P450 6t3 (Cyp6t3) from Drosophila melanogaster (Fruit fly).